The following is a 372-amino-acid chain: Alginate lyase (372 aa).

The N-terminal stretch at 1–22 (MKTRLALPCLLGSLLLSSAVHA) is a signal peptide. Residues 61–62 (SK), 134–135 (HT), and Y252 contribute to the substrate site.

Belongs to the polysaccharide lyase 5 family.

Its subcellular location is the periplasm. It catalyses the reaction Eliminative cleavage of alginate to give oligosaccharides with 4-deoxy-alpha-L-erythro-hex-4-enuronosyl groups at their non-reducing ends and beta-D-mannuronate at their reducing end.. With respect to regulation, monovalent cations such as potassium and sodium enhance activity, as well as a combined action of these cations with magnesium. However, other cations like calcium, cobalt, manganese and zinc, or the presence of EDTA, do not affect the enzymatic activity. In terms of biological role, catalyzes the depolymerization of alginate by cleaving the beta-1,4 glycosidic bond between two adjacent sugar residues via a beta-elimination mechanism. Degrades deacetylated polymannuronate alginate more efficiently than non-deacetylated polyM. Is able to degrade its own alginate, but at a lower efficiency than that produced from M.pyriferia and P.aeruginosa. May serve to degrade mislocalized alginate that is trapped in the periplasmic space. The polypeptide is Alginate lyase (Azotobacter chroococcum mcd 1).